A 183-amino-acid polypeptide reads, in one-letter code: Ribosome rescue factor SmrB (183 aa).

Residues Leu-98–Glu-173 enclose the Smr domain.

It belongs to the SmrB family. In terms of assembly, associates with collided ribosomes, but not with correctly translating polysomes.

Its function is as follows. Acts as a ribosome collision sensor. Detects stalled/collided disomes (pairs of ribosomes where the leading ribosome is stalled and a second ribosome has collided with it) and endonucleolytically cleaves mRNA at the 5' boundary of the stalled ribosome. Stalled/collided disomes form a new interface (primarily via the 30S subunits) that binds SmrB. Cleaved mRNA becomes available for tmRNA ligation, leading to ribosomal subunit dissociation and rescue of stalled ribosomes. This Escherichia coli O157:H7 protein is Ribosome rescue factor SmrB.